We begin with the raw amino-acid sequence, 680 residues long: Harmonin-binding protein USHBP1 (680 aa).

The span at 1–15 (MSARATRPRSRRGRH) shows a compositional bias: basic residues. 3 disordered regions span residues 1 to 101 (MSAR…GPAE), 135 to 162 (PVEAEDRDPGAPGSFGNEEEASGPGQQE), and 217 to 250 (ASPPPSMLRAGRRNSNSSSSGAERRPWAPQDSPM). The segment covering 76–86 (PEERREPEVEA) has biased composition (basic and acidic residues). 3 coiled-coil regions span residues 177 to 219 (LGTR…EASP), 362 to 386 (ATNGDLQAAEKEASRLLVKKEVAMD), and 479 to 506 (LADLVLRLQLAQREKRGLELREAALRAQ). The tract at residues 524 to 562 (LMGDGSSGGSSEDPSSEEEAGEDRQQHYQGPPALLGGQM) is disordered. Positions 573–661 (QELSASLTRA…QQAEELAVLT (89 aa)) form a coiled coil.

Belongs to the MCC family. As to quaternary structure, interacts via its C-terminus with the first PDZ domain of USH1C.

This is Harmonin-binding protein USHBP1 from Rattus norvegicus (Rat).